Reading from the N-terminus, the 736-residue chain is Catalase-peroxidase (736 aa).

Basic and acidic residues predominate over residues 1–10 (MDAKTDDKGA). The disordered stretch occupies residues 1 to 26 (MDAKTDDKGAGKCPFSGGSHGHRNRD). The segment at residues 96–218 (WHSAGTYRIT…LGAVQMGLIY (123 aa)) is a cross-link (tryptophyl-tyrosyl-methioninium (Trp-Tyr) (with M-244)). Catalysis depends on His-97, which acts as the Proton acceptor. Positions 218–244 (YVNPEGPNGNPDPVAAAKDIRETFARM) form a cross-link, tryptophyl-tyrosyl-methioninium (Tyr-Met) (with W-96). His-259 is a heme b binding site.

Belongs to the peroxidase family. Peroxidase/catalase subfamily. In terms of assembly, homodimer or homotetramer. Requires heme b as cofactor. Formation of the three residue Trp-Tyr-Met cross-link is important for the catalase, but not the peroxidase activity of the enzyme.

It carries out the reaction H2O2 + AH2 = A + 2 H2O. The enzyme catalyses 2 H2O2 = O2 + 2 H2O. In terms of biological role, bifunctional enzyme with both catalase and broad-spectrum peroxidase activity. In Rhodopseudomonas palustris (strain ATCC BAA-98 / CGA009), this protein is Catalase-peroxidase.